Here is a 341-residue protein sequence, read N- to C-terminus: Fructose-1,6-bisphosphatase, cytosolic (341 aa).

Positions 71, 100, 121, 123, and 124 each coordinate Mg(2+). Substrate contacts are provided by residues aspartate 124–serine 127, asparagine 215, tyrosine 247, tyrosine 267, and lysine 277. Mg(2+) is bound at residue glutamate 283.

Belongs to the FBPase class 1 family. It depends on Mg(2+) as a cofactor.

The protein resides in the cytoplasm. It catalyses the reaction beta-D-fructose 1,6-bisphosphate + H2O = beta-D-fructose 6-phosphate + phosphate. In Spinacia oleracea (Spinach), this protein is Fructose-1,6-bisphosphatase, cytosolic.